Reading from the N-terminus, the 97-residue chain is Defensin-like protein 246 (97 aa).

The signal sequence occupies residues 1 to 24 (MKFVAIFLVTCVLFSLFPSHLSQG). Intrachain disulfides connect cysteine 39–cysteine 96, cysteine 50–cysteine 79, cysteine 58–cysteine 89, and cysteine 77–cysteine 91.

Belongs to the DEFL family. As to expression, flower buds and stems.

It is found in the secreted. The sequence is that of Defensin-like protein 246 (SCRL5) from Arabidopsis thaliana (Mouse-ear cress).